A 240-amino-acid polypeptide reads, in one-letter code: Phosphoribosylaminoimidazole-succinocarboxamide synthase (240 aa).

It belongs to the SAICAR synthetase family.

It catalyses the reaction 5-amino-1-(5-phospho-D-ribosyl)imidazole-4-carboxylate + L-aspartate + ATP = (2S)-2-[5-amino-1-(5-phospho-beta-D-ribosyl)imidazole-4-carboxamido]succinate + ADP + phosphate + 2 H(+). It participates in purine metabolism; IMP biosynthesis via de novo pathway; 5-amino-1-(5-phospho-D-ribosyl)imidazole-4-carboxamide from 5-amino-1-(5-phospho-D-ribosyl)imidazole-4-carboxylate: step 1/2. This Wigglesworthia glossinidia brevipalpis protein is Phosphoribosylaminoimidazole-succinocarboxamide synthase.